Consider the following 476-residue polypeptide: TOM1-like protein 1 (476 aa).

The VHS domain maps to 22 to 154 (ATFAGVQTED…DLVKKGVQFP (133 aa)). The tract at residues 155–179 (PSEAEAETARQETAQISSNPPTSVP) is disordered. Polar residues predominate over residues 170–179 (ISSNPPTSVP). Residue S171 is modified to Phosphoserine. Residues 200 to 288 (EQIGKLHSEL…AILGYERFTR (89 aa)) enclose the GAT domain. The segment covering 298–314 (KNQKEATNTTSEPSAPS) has biased composition (polar residues). Residues 298–327 (KNQKEATNTTSEPSAPSQDLLDLSPSPRMP) form a disordered region. S314, S321, and S323 each carry phosphoserine. The segment at 392–395 (YDNF) is interaction with GRB2. The SH3-binding motif lies at 421-425 (LPPLP). Residues 442-445 (YEVM) are interaction with PIK3R1. The residue at position 460 (Y460) is a Phosphotyrosine. Positions 460–463 (YEEI) match the SH2-binding motif.

This sequence belongs to the TOM1 family. As to quaternary structure, interacts with FYN, GRB2 and PIK3R1 when phosphorylated. Interacts with LYN. In terms of processing, phosphorylated on tyrosines by FYN and LYN.

The protein localises to the golgi apparatus. It is found in the golgi stack. The protein resides in the endosome membrane. It localises to the cytoplasm. Its subcellular location is the membrane. Functionally, probable adapter protein involved in signaling pathways. Interacts with the SH2 and SH3 domains of various signaling proteins when it is phosphorylated. May promote FYN activation, possibly by disrupting intramolecular SH3-dependent interactions. This Homo sapiens (Human) protein is TOM1-like protein 1 (TOM1L1).